The primary structure comprises 526 residues: GMP synthase [glutamine-hydrolyzing] (526 aa).

A Glutamine amidotransferase type-1 domain is found at 9–208; that stretch reads RILILDFGSQ…VKDICGCECL (200 aa). The active-site Nucleophile is Cys-86. Residues His-182 and Glu-184 contribute to the active site. Residues 209–401 form the GMPS ATP-PPase domain; the sequence is WTPATIIDDA…LGLPYDMLYR (193 aa). 236–242 serves as a coordination point for ATP; the sequence is SGGVDSS.

In terms of assembly, homodimer.

It carries out the reaction XMP + L-glutamine + ATP + H2O = GMP + L-glutamate + AMP + diphosphate + 2 H(+). Its pathway is purine metabolism; GMP biosynthesis; GMP from XMP (L-Gln route): step 1/1. Catalyzes the synthesis of GMP from XMP. This Aeromonas salmonicida (strain A449) protein is GMP synthase [glutamine-hydrolyzing].